Consider the following 326-residue polypeptide: Tetraacyldisaccharide 4'-kinase (326 aa).

Position 55 to 62 (55 to 62 (TAGGNGKT)) interacts with ATP.

Belongs to the LpxK family.

It catalyses the reaction a lipid A disaccharide + ATP = a lipid IVA + ADP + H(+). Its pathway is glycolipid biosynthesis; lipid IV(A) biosynthesis; lipid IV(A) from (3R)-3-hydroxytetradecanoyl-[acyl-carrier-protein] and UDP-N-acetyl-alpha-D-glucosamine: step 6/6. In terms of biological role, transfers the gamma-phosphate of ATP to the 4'-position of a tetraacyldisaccharide 1-phosphate intermediate (termed DS-1-P) to form tetraacyldisaccharide 1,4'-bis-phosphate (lipid IVA). The chain is Tetraacyldisaccharide 4'-kinase from Erwinia tasmaniensis (strain DSM 17950 / CFBP 7177 / CIP 109463 / NCPPB 4357 / Et1/99).